We begin with the raw amino-acid sequence, 410 residues long: Peptidase T (410 aa).

His-78 lines the Zn(2+) pocket. The active site involves Asp-80. Asp-139 is a Zn(2+) binding site. Glu-173 acts as the Proton acceptor in catalysis. Residues Glu-174, Asp-196, and His-378 each contribute to the Zn(2+) site.

This sequence belongs to the peptidase M20B family. Zn(2+) is required as a cofactor.

Its subcellular location is the cytoplasm. The enzyme catalyses Release of the N-terminal residue from a tripeptide.. Cleaves the N-terminal amino acid of tripeptides. The sequence is that of Peptidase T from Shewanella woodyi (strain ATCC 51908 / MS32).